The primary structure comprises 85 residues: Sec-independent protein translocase protein TatA (85 aa).

A helical transmembrane segment spans residues 1 to 21 (MGGISIWQLLIIALIVVLLFG). The disordered stretch occupies residues 43–85 (MSSDEDKKALEDAEAAKSVQTAQTAQPTQQATEKKPESNKEQA). A compositionally biased stretch (basic and acidic residues) spans 46–57 (DEDKKALEDAEA). Residues 58-73 (AKSVQTAQTAQPTQQA) show a composition bias toward low complexity. Residues 74 to 85 (TEKKPESNKEQA) are compositionally biased toward basic and acidic residues.

The protein belongs to the TatA/E family. As to quaternary structure, the Tat system comprises two distinct complexes: a TatABC complex, containing multiple copies of TatA, TatB and TatC subunits, and a separate TatA complex, containing only TatA subunits. Substrates initially bind to the TatABC complex, which probably triggers association of the separate TatA complex to form the active translocon.

It localises to the cell inner membrane. Part of the twin-arginine translocation (Tat) system that transports large folded proteins containing a characteristic twin-arginine motif in their signal peptide across membranes. TatA could form the protein-conducting channel of the Tat system. This is Sec-independent protein translocase protein TatA from Shewanella sp. (strain ANA-3).